Consider the following 396-residue polypeptide: MFSQAQFNVTMAEEDRWKQWYPNMEMIVNNKGPKLIFPELNFNITGLEEKSRYVVLLSIEKYDNIRYGYRNGKWGPSKVRHATKKEQEIKYFLHPDGTKLGKELMKETIKFDTVRITNHKKFMDKDNVFFVETMHKYVPVLTVKNITNVESANHSMRMEVAQFFPVTVYNQESIGNWKSKFHKNSTYGNRLDGGNKRKNTDSSEERTSKRSKNETEIAVSDILQVASQSENYNESTNSGRLQNEISSSIHQFPSTSYQNQYPHAYPTVNTPPIYVQQFTALFDEIHNQFDPKTKQNRVAKNVQYLSSVPQFAINQKENIHQNAPDYPVSQFPNQYPYGSYPYYYPYFQSSQQFPHLNYSMNNSIYSDSSFQSSFSAENSYFDENGNPIHYPYYSSN.

The T-box DNA-binding region spans 11 to 192; the sequence is MAEEDRWKQW…KNSTYGNRLD (182 aa). Residues 185–215 form a disordered region; the sequence is STYGNRLDGGNKRKNTDSSEERTSKRSKNET. The span at 193 to 215 shows a compositional bias: basic and acidic residues; sequence GGNKRKNTDSSEERTSKRSKNET.

It localises to the nucleus. This Caenorhabditis elegans protein is Putative T-box protein 39 (tbx-39).